The sequence spans 64 residues: MGMRMMFTVFLLVVLTTTVVSFPSDSASDGRDDEAKDERSDIYESKRNGRCCHPACGKYYSCGR.

The first 21 residues, 1 to 21, serve as a signal peptide directing secretion; sequence MGMRMMFTVFLLVVLTTTVVS. The propeptide occupies 22-47; that stretch reads FPSDSASDGRDDEAKDERSDIYESKR. 2 cysteine pairs are disulfide-bonded: Cys51–Cys56 and Cys52–Cys62. A 4-hydroxyproline; in CnIK; partial modification is found at Pro54. Residue Cys62 is modified to Cysteine amide.

The protein belongs to the conotoxin A superfamily. In terms of tissue distribution, expressed by the venom duct.

It localises to the secreted. In terms of biological role, alpha-conotoxins act on postsynaptic membranes, they bind to the nicotinic acetylcholine receptors (nAChR) and thus inhibit them. CnIA and CnIB block muscular nAChR alpha-1/gamma and alpha-1/delta subunits. The sequence is that of Alpha-conotoxin CnIA from Conus consors (Singed cone).